Here is a 194-residue protein sequence, read N- to C-terminus: Molybdenum cofactor guanylyltransferase (194 aa).

GTP-binding positions include 12–14 (LAG), Lys-25, Asn-53, Asp-70, and Asp-100. Asp-100 lines the Mg(2+) pocket.

The protein belongs to the MobA family. In terms of assembly, monomer. It depends on Mg(2+) as a cofactor.

Its subcellular location is the cytoplasm. The catalysed reaction is Mo-molybdopterin + GTP + H(+) = Mo-molybdopterin guanine dinucleotide + diphosphate. Functionally, transfers a GMP moiety from GTP to Mo-molybdopterin (Mo-MPT) cofactor (Moco or molybdenum cofactor) to form Mo-molybdopterin guanine dinucleotide (Mo-MGD) cofactor. The polypeptide is Molybdenum cofactor guanylyltransferase (Photobacterium profundum (strain SS9)).